Reading from the N-terminus, the 66-residue chain is Large ribosomal subunit protein uL29 (66 aa).

This sequence belongs to the universal ribosomal protein uL29 family.

The sequence is that of Large ribosomal subunit protein uL29 from Rhizobium etli (strain CIAT 652).